A 545-amino-acid polypeptide reads, in one-letter code: Chaperonin GroEL 2 (545 aa).

ATP contacts are provided by residues 29–32 (TLGP), 86–90 (DGTTT), glycine 414, and aspartate 499.

Belongs to the chaperonin (HSP60) family. In terms of assembly, forms a cylinder of 14 subunits composed of two heptameric rings stacked back-to-back. Interacts with the co-chaperonin GroES.

The protein localises to the cytoplasm. The enzyme catalyses ATP + H2O + a folded polypeptide = ADP + phosphate + an unfolded polypeptide.. Together with its co-chaperonin GroES, plays an essential role in assisting protein folding. The GroEL-GroES system forms a nano-cage that allows encapsulation of the non-native substrate proteins and provides a physical environment optimized to promote and accelerate protein folding. This chain is Chaperonin GroEL 2, found in Chloroflexus aurantiacus (strain ATCC 29366 / DSM 635 / J-10-fl).